A 223-amino-acid chain; its full sequence is Deoxyribose-phosphate aldolase (223 aa).

Asp89 functions as the Proton donor/acceptor in the catalytic mechanism. Lys152 acts as the Schiff-base intermediate with acetaldehyde in catalysis. The active-site Proton donor/acceptor is Lys181.

The protein belongs to the DeoC/FbaB aldolase family. DeoC type 1 subfamily.

It is found in the cytoplasm. It carries out the reaction 2-deoxy-D-ribose 5-phosphate = D-glyceraldehyde 3-phosphate + acetaldehyde. Its pathway is carbohydrate degradation; 2-deoxy-D-ribose 1-phosphate degradation; D-glyceraldehyde 3-phosphate and acetaldehyde from 2-deoxy-alpha-D-ribose 1-phosphate: step 2/2. In terms of biological role, catalyzes a reversible aldol reaction between acetaldehyde and D-glyceraldehyde 3-phosphate to generate 2-deoxy-D-ribose 5-phosphate. The polypeptide is Deoxyribose-phosphate aldolase (Listeria monocytogenes serotype 4b (strain CLIP80459)).